Consider the following 463-residue polypeptide: Chaperone SurA (463 aa).

Positions 1-25 (MTRYFSIVLSLLLAVSCVFLPVASA) are cleaved as a signal peptide. PpiC domains follow at residues 175-277 (GAQY…KLVE) and 291-390 (ATEY…QRLG). Residues 439-463 (ADDHHTPSAAVTPATGAVLPAATKH) are disordered.

The protein localises to the periplasm. It catalyses the reaction [protein]-peptidylproline (omega=180) = [protein]-peptidylproline (omega=0). Its function is as follows. Chaperone involved in the correct folding and assembly of outer membrane proteins. Recognizes specific patterns of aromatic residues and the orientation of their side chains, which are found more frequently in integral outer membrane proteins. May act in both early periplasmic and late outer membrane-associated steps of protein maturation. The polypeptide is Chaperone SurA (Xylella fastidiosa (strain Temecula1 / ATCC 700964)).